The primary structure comprises 142 residues: Large ribosomal subunit protein uL22 (142 aa).

A disordered region spans residues 122–142; sequence RAEAPEETKPSRGTNKEQKAA.

Belongs to the universal ribosomal protein uL22 family. In terms of assembly, part of the 50S ribosomal subunit.

Functionally, this protein binds specifically to 23S rRNA; its binding is stimulated by other ribosomal proteins, e.g. L4, L17, and L20. It is important during the early stages of 50S assembly. It makes multiple contacts with different domains of the 23S rRNA in the assembled 50S subunit and ribosome. In terms of biological role, the globular domain of the protein is located near the polypeptide exit tunnel on the outside of the subunit, while an extended beta-hairpin is found that lines the wall of the exit tunnel in the center of the 70S ribosome. This chain is Large ribosomal subunit protein uL22, found in Gluconobacter oxydans (strain 621H) (Gluconobacter suboxydans).